The primary structure comprises 480 residues: Proline--tRNA ligase (480 aa).

The protein belongs to the class-II aminoacyl-tRNA synthetase family. ProS type 3 subfamily. In terms of assembly, homodimer.

Its subcellular location is the cytoplasm. It catalyses the reaction tRNA(Pro) + L-proline + ATP = L-prolyl-tRNA(Pro) + AMP + diphosphate. Catalyzes the attachment of proline to tRNA(Pro) in a two-step reaction: proline is first activated by ATP to form Pro-AMP and then transferred to the acceptor end of tRNA(Pro). This chain is Proline--tRNA ligase, found in Pyrococcus abyssi (strain GE5 / Orsay).